Reading from the N-terminus, the 303-residue chain is MPKILDGKKLAQEIELILQQAIESGLEVAKRRPGLAVLRVGDDPASGVYVNYKEKACDRIGVRSFAKHLKEDISLEELTETIKSLNEEKNVDGILLQLPLPSHLDEAALLRSIDPDKDADGLHPLNLGRLIKGEKGPRSCTPAGVMSLLERNQIKIEGKRAVVVGRSILVGKPMALMLEAANATVTIAHSRTKDLPSLTKEADLLVVAAGKPYLIGKNHVSENCVVIDVGIHRLPPDEENIKELKKTKLCGDVKIFEIEDKVAAYSPVPGGVGPMTVTMLLANTVDRWQKHCGLPLTISHLLP.

NADP(+) contacts are provided by residues 165–167 (GRS), serine 190, and isoleucine 231.

Belongs to the tetrahydrofolate dehydrogenase/cyclohydrolase family. Homodimer.

It carries out the reaction (6R)-5,10-methylene-5,6,7,8-tetrahydrofolate + NADP(+) = (6R)-5,10-methenyltetrahydrofolate + NADPH. It catalyses the reaction (6R)-5,10-methenyltetrahydrofolate + H2O = (6R)-10-formyltetrahydrofolate + H(+). It participates in one-carbon metabolism; tetrahydrofolate interconversion. In terms of biological role, catalyzes the oxidation of 5,10-methylenetetrahydrofolate to 5,10-methenyltetrahydrofolate and then the hydrolysis of 5,10-methenyltetrahydrofolate to 10-formyltetrahydrofolate. This is Bifunctional protein FolD from Prochlorococcus marinus (strain NATL1A).